The chain runs to 430 residues: Pre-B-cell leukemia transcription factor 2 (430 aa).

A disordered region spans residues 1–52 (MDERLLGPPPPGGGRGGLGLVSGEPGGPGEPPGGGDPGGGSGGVPGGRGKQD). Over residues 13–48 (GGRGGLGLVSGEPGGPGEPPGGGDPGGGSGGVPGGR) the composition is skewed to gly residues. The PBC domain occupies 48 to 243 (RGKQDIGDIL…VMILRSRFLD (196 aa)). Residues 55 to 134 (DILQQIMTIT…EGVAGPEKGG (80 aa)) form a PBC-A region. S136, S151, and S159 each carry phosphoserine. The tract at residues 137–243 (AAAAAAAAAS…VMILRSRFLD (107 aa)) is PBC-B. Positions 244–306 (ARRKRRNFSK…NKRIRYKKNI (63 aa)) form a DNA-binding region, homeobox; TALE-type. Disordered stretches follow at residues 326-347 (QGGHSRTSSPTPPSSAGSGGSF) and 378-430 (SMGP…DTSN). Phosphoserine is present on S330. Residues 380–392 (GPGGYGDNLGGGQ) are compositionally biased toward gly residues. At S395 the chain carries Phosphoserine. A compositionally biased stretch (polar residues) spans 403-418 (GSWQEAVTPSSVTSPT).

The protein belongs to the TALE/PBX homeobox family. Forms heterodimers with MEIS1 and heterotrimers with MEIS1 and HOXA9. Interacts with PBXIP1. Ubiquitously expressed.

The protein resides in the nucleus. In terms of biological role, transcriptional activator that binds the sequence 5'-ATCAATCAA-3'. Activates transcription of PF4 in complex with MEIS1. This Homo sapiens (Human) protein is Pre-B-cell leukemia transcription factor 2 (PBX2).